The following is a 475-amino-acid chain: Ammonium transporter Rh type C (475 aa).

The Cytoplasmic segment spans residues 1–20; sequence MGCVQSFRNFCDRPKNTNVR. The helical transmembrane segment at 21-41 threads the bilayer; it reads ISLPAVCFVWQIAMIILFGVF. The Extracellular portion of the chain corresponds to 42–73; the sequence is IRYNEEADTHWVEYRKKENISSDIENDFYFRY. N-linked (GlcNAc...) asparagine glycosylation is present at N60. Residues 74–94 traverse the membrane as a helical segment; the sequence is PSFQDVHVMIFVGFGFLMTFL. Over 95 to 98 the chain is Cytoplasmic; it reads KRYS. A helical membrane pass occupies residues 99–119; that stretch reads FGAVGFNFLIAAFGLQWALLM. The Extracellular portion of the chain corresponds to 120 to 138; it reads QGWFHSLDYTDGKIKIGIE. A helical transmembrane segment spans residues 139 to 159; it reads NLINADFCVAGCLIAYGAVLG. Over 160-167 the chain is Cytoplasmic; sequence KVSPVQLM. Residues 168 to 188 traverse the membrane as a helical segment; it reads VLTLFGITLFAVEEYIILNLI. The Extracellular segment spans residues 189 to 193; that stretch reads HARDA. A helical transmembrane segment spans residues 194 to 214; it reads GGSMVIHTFGGYYGLSISWML. Residues 215 to 233 lie on the Cytoplasmic side of the membrane; sequence YRPNLEQSSNLQGSVYQSD. A helical membrane pass occupies residues 234–254; it reads VFAMIGTLFLWMFWPSFNSAI. The Extracellular portion of the chain corresponds to 255-265; that stretch reads TDHGDGQHRAA. A helical transmembrane segment spans residues 266–286; sequence INTYLALASTVLTTVAISSLF. Residues 287-299 are Cytoplasmic-facing; the sequence is QKHGKLDMVHIQN. The helical transmembrane segment at 300 to 320 threads the bilayer; that stretch reads STLAGGVAVGTAAEFMLMPYG. S321 is a topological domain (extracellular). The helical transmembrane segment at 322–342 threads the bilayer; that stretch reads LIVGFCCGIISTLGYIYLTPF. Residues 343–357 lie on the Cytoplasmic side of the membrane; sequence MEKYLKIQDTCGIHN. The chain crosses the membrane as a helical span at residues 358–378; that stretch reads LHAMPGLIGGIVGAITAAAAT. The Extracellular portion of the chain corresponds to 379–410; it reads ESVYGKEGLVNTFDFVGPFKNMVPTTQGGHQA. A helical membrane pass occupies residues 411-431; it reads AGLCVAICFGIGGGIMVGCIL. Residues 432–475 are Cytoplasmic-facing; it reads RLPIWCDPADDNCFNDEPYWELPEEEEIIPPILHYNNHMVNKDV.

This sequence belongs to the ammonium transporter (TC 2.A.49) family. Rh subfamily. Homotrimer.

The protein resides in the apical cell membrane. In terms of biological role, functions as an ammonia transporter. May play a role in the elimination of ammonia in the gill. This is Ammonium transporter Rh type C (rhcg) from Tetraodon nigroviridis (Spotted green pufferfish).